The chain runs to 408 residues: Tyrosine--tRNA ligase (408 aa).

The 'HIGH' region motif lies at 50 to 59 (PTGKDLTLGH). Positions 234–238 (KMSKS) match the 'KMSKS' region motif. Position 237 (lysine 237) interacts with ATP. Residues 346 to 407 (MQAARVLFTA…GKRKYGRVVL (62 aa)) enclose the S4 RNA-binding domain.

The protein belongs to the class-I aminoacyl-tRNA synthetase family. TyrS type 2 subfamily. As to quaternary structure, homodimer.

The protein resides in the cytoplasm. The enzyme catalyses tRNA(Tyr) + L-tyrosine + ATP = L-tyrosyl-tRNA(Tyr) + AMP + diphosphate + H(+). In terms of biological role, catalyzes the attachment of tyrosine to tRNA(Tyr) in a two-step reaction: tyrosine is first activated by ATP to form Tyr-AMP and then transferred to the acceptor end of tRNA(Tyr). The polypeptide is Tyrosine--tRNA ligase (Symbiobacterium thermophilum (strain DSM 24528 / JCM 14929 / IAM 14863 / T)).